We begin with the raw amino-acid sequence, 202 residues long: MSPLTPKQKQVFDYIARHIGEQGFAPSQQEIARAFGFRSLGTVRNYLVRLEREGLLERNWNARRGLQLRTASERGMKLPLAGTVAAGKPIEAIEIPDVIEVPPTMVGSGEHFVLRVAGDSMIGDGIIDGDYVVVRKQATAEHGQTVVALLDNEATVKRLHRRNDRIELHPANPSMQPIVVTDPDNFRIEGVVVGVIRHYRSA.

The H-T-H motif DNA-binding region spans Gln28–Val48. Active-site for autocatalytic cleavage activity residues include Ser120 and Lys157.

It belongs to the peptidase S24 family. Homodimer.

It catalyses the reaction Hydrolysis of Ala-|-Gly bond in repressor LexA.. Functionally, represses a number of genes involved in the response to DNA damage (SOS response), including recA and lexA. In the presence of single-stranded DNA, RecA interacts with LexA causing an autocatalytic cleavage which disrupts the DNA-binding part of LexA, leading to derepression of the SOS regulon and eventually DNA repair. This chain is LexA repressor, found in Syntrophotalea carbinolica (strain DSM 2380 / NBRC 103641 / GraBd1) (Pelobacter carbinolicus).